We begin with the raw amino-acid sequence, 534 residues long: Beta-glucosidase 32 (534 aa).

Residues 1 to 22 (MAIKLIALVITICVASWDSAQG) form the signal peptide. A beta-D-glucoside is bound at residue Gln-51. Asn-68 is a glycosylation site (N-linked (GlcNAc...) asparagine). A beta-D-glucoside is bound by residues His-154 and 199–200 (NE). The active-site Proton donor is the Glu-200. Cys-219 and Cys-227 are oxidised to a cystine. Tyr-344 is a binding site for a beta-D-glucoside. An N-linked (GlcNAc...) asparagine glycan is attached at Asn-374. An a beta-D-glucoside-binding site is contributed by Glu-417. Glu-417 (nucleophile) is an active-site residue. Asn-425 is a glycosylation site (N-linked (GlcNAc...) asparagine). A beta-D-glucoside-binding positions include Trp-467, 474-475 (EW), and Phe-483.

It belongs to the glycosyl hydrolase 1 family.

It carries out the reaction Hydrolysis of terminal, non-reducing beta-D-glucosyl residues with release of beta-D-glucose.. This chain is Beta-glucosidase 32, found in Arabidopsis thaliana (Mouse-ear cress).